Here is a 319-residue protein sequence, read N- to C-terminus: Tetrahydromethanopterin S-methyltransferase subunit H (319 aa).

This sequence belongs to the MtrH family. The complex is composed of 8 subunits; MtrA, MtrB, MtrC, MtrD, MtrE, MtrF, MtrG and MtrH.

It carries out the reaction 5-methyl-5,6,7,8-tetrahydromethanopterin + coenzyme M + 2 Na(+)(in) = 5,6,7,8-tetrahydromethanopterin + methyl-coenzyme M + 2 Na(+)(out). It functions in the pathway one-carbon metabolism; methanogenesis from CO(2); methyl-coenzyme M from 5,10-methylene-5,6,7,8-tetrahydromethanopterin: step 2/2. Functionally, part of a complex that catalyzes the formation of methyl-coenzyme M and tetrahydromethanopterin from coenzyme M and methyl-tetrahydromethanopterin. This is an energy-conserving, sodium-ion translocating step. MtrH catalyzes the transfer of the methyl group from methyl-tetrahydromethanopterin to the corrinoid prosthetic group of MtrA. This chain is Tetrahydromethanopterin S-methyltransferase subunit H, found in Methanococcus maripaludis (strain C5 / ATCC BAA-1333).